The chain runs to 238 residues: Probable amino-acid ABC transporter permease protein y4tF (238 aa).

The ABC transmembrane type-1 domain maps to 29-223 (AWVTIQFTLY…GIALVLSFFM (195 aa)). The next 5 membrane-spanning stretches (helical) occupy residues 33-53 (IQFTLYSMFFGAVCSFAFGIG), 77-97 (LLVQLFWLFFALPIAGDMMGI), 103-123 (PVVAGVLALSLNLGAYGAEIV), 152-172 (VALPQAIPEMMPSFSNLAIAA), and 203-223 (TVYTMVLLMYFGIALVLSFFM).

This sequence belongs to the binding-protein-dependent transport system permease family. HisMQ subfamily.

The protein localises to the cell inner membrane. Its function is as follows. Probably part of the binding-protein-dependent transport system y4tEFGH for an amino acid. Probably responsible for the translocation of the substrate across the membrane. This Sinorhizobium fredii (strain NBRC 101917 / NGR234) protein is Probable amino-acid ABC transporter permease protein y4tF.